Consider the following 604-residue polypeptide: MMRAVWEALAALAAVACLVGAVRGGPGLSMFAGQAAQPDPCSDENGHPRRCIPDFVNAAFGKDVRVSSTCGRPPARYCVVSERGEERLRSCHLCNSSDPKKAHPPAFLTDLNNPHNLTCWQSENYLQFPHNVTLTLSLGKKFEVTYVSLQFCSPRPESMAIYKSMDYGRTWVPFQFYSTQCRKMYNRPHRAPITKQNEQEAVCTDSHTDMRPLSGGLIAFSTLDGRPSAHDFDNSPVLQDWVTATDIRVAFSRLHTFGDENEDDSELARDSYYYAVSDLQVGGRCKCNGHAARCVRDRDDSLVCDCRHNTAGPECDRCKPFHYDRPWQRATAREANECVACNCNLHARRCRFNMELYKLSGRKSGGVCLNCRHNTAGRHCHYCKEGFYRDMGKPITHRKACKACDCHPVGAAGKTCNQTTGQCPCKDGVTGITCNRCAKGYQQSRSPIAPCIKIPVAPPTTAASSMEEPEDCDSYCKASKGKLKMNMKKYCRKDYAVQIHILKADKAGDWWKFTVNIISVYKQGTSRIRRGDQSLWIRSRDIAXKCPKIKPLKKYLLLGNAEDSPDQSGIVADKSXLVIQWRDTWARRXRKFQQREKKGKCKKA.

The signal sequence occupies residues 1–24 (MMRAVWEALAALAAVACLVGAVRG). Residues 47–284 (HPRRCIPDFV…AVSDLQVGGR (238 aa)) enclose the Laminin N-terminal domain. Residues Asn-95, Asn-116, and Asn-131 are each glycosylated (N-linked (GlcNAc...) asparagine). 15 disulfide bridges follow: Cys-119-Cys-152, Cys-285-Cys-294, Cys-287-Cys-304, Cys-306-Cys-315, Cys-318-Cys-338, Cys-341-Cys-350, Cys-343-Cys-368, Cys-371-Cys-380, Cys-383-Cys-401, Cys-404-Cys-416, Cys-406-Cys-423, Cys-425-Cys-434, Cys-437-Cys-451, Cys-472-Xaa-544, and Cys-491-Cys-601. Laminin EGF-like domains follow at residues 285-340 (CKCN…ECVA), 341-403 (CNCN…ACKA), and 404-453 (CDCH…PCIK). Asn-417 carries an N-linked (GlcNAc...) asparagine glycan. One can recognise an NTR domain in the interval 472 to 601 (CDSYCKASKG…FQQREKKGKC (130 aa)). The short motif at 530–532 (RGD) is the Cell attachment site element.

As to quaternary structure, binds to its receptors; DCC, UNC5A, UNC5B, UNC5C and probably UNC5D. Binds to its receptor; DSCAM. Interacts with APP.

It localises to the secreted. The protein resides in the cytoplasm. Its function is as follows. Netrins control guidance of CNS commissural axons and peripheral motor axons. Its association with either DCC or some UNC5 receptors will lead to axon attraction or repulsion, respectively. Binding to UNC5C might cause dissociation of UNC5C from polymerized TUBB3 in microtubules and thereby lead to increased microtubule dynamics and axon repulsion. Involved in dorsal root ganglion axon projection towards the spinal cord. It also serves as a survival factor via its association with its receptors which prevent the initiation of apoptosis. Involved in colorectal tumorigenesis by regulating apoptosis. This chain is Netrin-1 (Ntn1), found in Rattus norvegicus (Rat).